The primary structure comprises 389 residues: Agamous-like MADS-box protein AGL65 (389 aa).

In terms of domain architecture, MADS-box spans methionine 1–histidine 61. 2 coiled-coil regions span residues glutamine 77–cysteine 131 and glycine 293–aspartate 325. Positions asparagine 310–proline 343 are disordered. Low complexity predominate over residues glutamine 312–glutamine 324.

In terms of assembly, forms a heterodimer with AGL104. Expressed in pollen.

The protein localises to the nucleus. Probable transcription factor that forms a heterodimer with the MADS-box protein AGL104 and is involved in the regulation of pollen maturation at the late stages of pollen development and pollen tube growth. The chain is Agamous-like MADS-box protein AGL65 from Arabidopsis thaliana (Mouse-ear cress).